A 228-amino-acid chain; its full sequence is Probable septum site-determining protein MinC (228 aa).

Belongs to the MinC family. As to quaternary structure, interacts with MinD and FtsZ.

Its function is as follows. Cell division inhibitor that blocks the formation of polar Z ring septums. Rapidly oscillates between the poles of the cell to destabilize FtsZ filaments that have formed before they mature into polar Z rings. Prevents FtsZ polymerization. The chain is Probable septum site-determining protein MinC from Bacillus anthracis (strain A0248).